A 469-amino-acid chain; its full sequence is Adenosylhomocysteinase (469 aa).

Positions 63, 139, and 164 each coordinate substrate. 165-167 is a binding site for NAD(+); the sequence is TTT. Substrate contacts are provided by lysine 194 and aspartate 198. NAD(+) is bound by residues asparagine 199, 228-233, glutamate 251, asparagine 300, 321-323, and asparagine 375; these read GYGDVG and IGH.

Belongs to the adenosylhomocysteinase family. NAD(+) serves as cofactor.

Its subcellular location is the cytoplasm. It catalyses the reaction S-adenosyl-L-homocysteine + H2O = L-homocysteine + adenosine. Its pathway is amino-acid biosynthesis; L-homocysteine biosynthesis; L-homocysteine from S-adenosyl-L-homocysteine: step 1/1. Functionally, may play a key role in the regulation of the intracellular concentration of adenosylhomocysteine. The protein is Adenosylhomocysteinase of Pseudomonas fluorescens (strain SBW25).